We begin with the raw amino-acid sequence, 690 residues long: Protein arginine N-methyltransferase 7 (690 aa).

2 consecutive SAM-dependent MTase PRMT-type domains span residues 14 to 357 (QNSW…YSLW) and 366 to 690 (TKSV…QKKL).

It belongs to the class I-like SAM-binding methyltransferase superfamily. Protein arginine N-methyltransferase family. PRMT7 subfamily.

In terms of biological role, essential arginine methyltransferase that can both catalyze the formation of omega-N monomethylarginine (MMA) and symmetrical dimethylarginine (sDMA). Specifically mediates the symmetrical dimethylation of arginine residues in the small nuclear ribonucleoproteins SmD1 and SmD3. This is Protein arginine N-methyltransferase 7 (Art7) from Drosophila sechellia (Fruit fly).